The chain runs to 359 residues: N-acetyl-gamma-glutamyl-phosphate reductase (359 aa).

Cys162 is a catalytic residue.

It belongs to the NAGSA dehydrogenase family. Type 1 subfamily.

Its subcellular location is the cytoplasm. It carries out the reaction N-acetyl-L-glutamate 5-semialdehyde + phosphate + NADP(+) = N-acetyl-L-glutamyl 5-phosphate + NADPH + H(+). It participates in amino-acid biosynthesis; L-arginine biosynthesis; N(2)-acetyl-L-ornithine from L-glutamate: step 3/4. In terms of biological role, catalyzes the NADPH-dependent reduction of N-acetyl-5-glutamyl phosphate to yield N-acetyl-L-glutamate 5-semialdehyde. The chain is N-acetyl-gamma-glutamyl-phosphate reductase from Prochlorococcus marinus (strain NATL2A).